A 39-amino-acid chain; its full sequence is Photosystem II reaction center protein L (39 aa).

A helical transmembrane segment spans residues 18–38 (SLYLGLLSVLVLGILFSSYFF).

The protein belongs to the PsbL family. PSII is composed of 1 copy each of membrane proteins PsbA, PsbB, PsbC, PsbD, PsbE, PsbF, PsbH, PsbI, PsbJ, PsbK, PsbL, PsbM, PsbT, PsbX, PsbY, Psb30/Ycf12, peripheral proteins PsbO, CyanoQ (PsbQ), PsbU, PsbV and a large number of cofactors. It forms dimeric complexes.

It localises to the cellular thylakoid membrane. Its function is as follows. One of the components of the core complex of photosystem II (PSII). PSII is a light-driven water:plastoquinone oxidoreductase that uses light energy to abstract electrons from H(2)O, generating O(2) and a proton gradient subsequently used for ATP formation. It consists of a core antenna complex that captures photons, and an electron transfer chain that converts photonic excitation into a charge separation. This subunit is found at the monomer-monomer interface and is required for correct PSII assembly and/or dimerization. This is Photosystem II reaction center protein L from Prochlorococcus marinus subsp. pastoris (strain CCMP1986 / NIES-2087 / MED4).